The primary structure comprises 383 residues: Anhydro-N-acetylmuramic acid kinase (383 aa).

9–16 contributes to the ATP binding site; it reads GTSVDSID.

It belongs to the anhydro-N-acetylmuramic acid kinase family.

It catalyses the reaction 1,6-anhydro-N-acetyl-beta-muramate + ATP + H2O = N-acetyl-D-muramate 6-phosphate + ADP + H(+). It functions in the pathway amino-sugar metabolism; 1,6-anhydro-N-acetylmuramate degradation. The protein operates within cell wall biogenesis; peptidoglycan recycling. Its function is as follows. Catalyzes the specific phosphorylation of 1,6-anhydro-N-acetylmuramic acid (anhMurNAc) with the simultaneous cleavage of the 1,6-anhydro ring, generating MurNAc-6-P. Is required for the utilization of anhMurNAc either imported from the medium or derived from its own cell wall murein, and thus plays a role in cell wall recycling. This is Anhydro-N-acetylmuramic acid kinase from Crocosphaera subtropica (strain ATCC 51142 / BH68) (Cyanothece sp. (strain ATCC 51142)).